An 886-amino-acid chain; its full sequence is Protein suppressor of hairy wing (886 aa).

Disordered stretches follow at residues 24–62 and 167–211; these read SVSP…GIKG and DEVV…KNSG. Residues 184–201 show a composition bias toward acidic residues; it reads VTEEEEEEEEDDLDEEGD. Residues 221-243 form a C2H2-type 1; atypical zinc finger; it reads HVCGKCYKTFRRLMSLKKHLEFC. The segment at 291-314 adopts a C2H2-type 2 zinc-finger fold; the sequence is INCPDCPKSFKTQTSYERHIFITH. The C2H2-type 3; atypical zinc finger occupies 320–342; that stretch reads YPCSICNANLRSEALLKLHEEQH. 9 C2H2-type zinc fingers span residues 349-367, 381-403, 414-436, 442-464, 470-492, 498-520, 524-546, 554-578, and 600-623; these read YACK…LKRH, MSCK…LKHH, YMCH…IRTH, FDCD…RRYH, YSCT…MKRH, HKCE…SKTH, FACD…VKEH, FSCT…AGDH, and TDCA…RSVH. Positions 571–587 are enriched in basic and acidic residues; that stretch reads QHMDAGDHSEKSGEKPQ. Positions 571-594 are disordered; that stretch reads QHMDAGDHSEKSGEKPQRAKRSST.

The protein resides in the nucleus. Component of the gypsy chromatin insulator complex which is required for the function of the gypsy chromatin insulator and other endogenous chromatin insulators. Chromatin insulators are regulatory elements which establish independent domains of transcriptional activity within eukaryotic genomes. Insulators have two defining properties; they can block the communication between an enhancer and a promoter when placed between them and can also buffer transgenes from position effect variegation (PEV). Insulators are proposed to structure the chromatin fiber into independent domains of differing transcriptional potential by promoting the formation of distinct chromatin loops. This chromatin looping may involve the formation of insulator bodies, where homotypic interactions between individual subunits of the insulator complex could promote the clustering of widely spaced insulators at the nuclear periphery. Within the gypsy insulator complex, this protein binds specifically to a region of the gypsy element located 3' of the 5' long terminal repeat (LTR), and may also mediate interaction with other endogenous insulators at sites distinct from those recognized by Cp190. Cooperates with pita and cliff to recruit Cp190 and regulate insulator function at the front-ultraabdominal (Fub) boundary. The sequence is that of Protein suppressor of hairy wing (su(Hw)) from Drosophila ananassae (Fruit fly).